A 276-amino-acid chain; its full sequence is Malectin-B (276 aa).

An N-terminal signal peptide occupies residues 1-26 (MLSIRTVLGPLAAILLTVIGPFGAHG). Over 27–253 (SGLADKVMWA…TPNPYASDNS (227 aa)) the chain is Lumenal. 5 residues coordinate a carbohydrate: tyrosine 67, tyrosine 89, tyrosine 116, phenylalanine 117, and aspartate 186. The segment at 202 to 249 (DVPQLQPHPGLEKKEEEEEEEEEEGSPSKKQSNKNRVQSGPRTPNPYA) is disordered. The segment covering 216–226 (EEEEEEEEEEG) has biased composition (acidic residues). A compositionally biased stretch (polar residues) spans 229–249 (SKKQSNKNRVQSGPRTPNPYA). Asparagine 252 is a glycosylation site (N-linked (GlcNAc...) asparagine). The helical transmembrane segment at 254–274 (SLMFPILVAFGVFIPTLFCLC) threads the bilayer. Over 275–276 (RL) the chain is Cytoplasmic.

This sequence belongs to the malectin family.

The protein localises to the endoplasmic reticulum membrane. Functionally, carbohydrate-binding protein with a strong ligand preference for Glc2-N-glycan. May play a role in the early steps of protein N-glycosylation. Can bind di- or higher oligomers but not monomers of glucose, including maltose, maltotriose, maltotetraose, maltoheptaose, nigerose, kojibose, cellobiose and isomaltose, although based on their subcellular locations, these are unlikely to all be physiological ligands. The protein is Malectin-B of Xenopus laevis (African clawed frog).